The primary structure comprises 634 residues: MSAEEVLENIRKEIIKKSPKEAKIVDVQFEGPEVVVYVKNPEIFTNEIIKSLAKDLRKRISIRPDPSVLVEPEIAKQKILEIVPEEAEITNFVFDANTGEVIIESKKPGLVIGKEGKTLEMIKKAIRWAPKPVRTPPIQSETIKAIRATLYRERHEVKEILRRIGRRIHRDIVVRGDYWIRVSFLGGAREVGRSCLYVQTPDTRVLIDCGINVACEDKAFPHFDAPEFSIEDLDAVIVTHAHLDHCGFIPGLFRYGYDGPVYCTRPTRDLMTLLQKDYLEIAKKEGKEVPYTSKDIKTCVKHTIPIDYGVTTDISPTIKLTLHNAGHVLGSAIAHLHIGEGLYNLAYTGDIKFETSRLLEPAVCQFPRLETLIIESTYGAYDDVLPEREEAERELLRVVSETTDRGGKVLIPVFGVGRAQELMLVLEEGYNQGIFNAPVYLDGMIWEATAIHTAYPEYLSKEMRQKIFHEGDNPFLSEVFKRVGSTNERRKVIDSDEPCVILATSGMLTGGPSVEYLKHLAPDEKNAIIFVGYQAEGTLGRKVQSGWKEIPIITRNGKTKSIPINLQVYTIEGFSGHSDRKQLIKYIRRLKPSPEKIIMVHGEESKCLDFADTVRRLFKKQTYVPMNLDAIRVK.

Residues glutamate 4–leucine 69 are KHa. The tract at residues valine 70–proline 137 is KHb. Positions tryptophan 179–tyrosine 381 are metallo-beta-lactamase N-terminus. Zn(2+) is bound by residues histidine 240, histidine 242, aspartate 244, histidine 245, histidine 327, and aspartate 350. The segment at aspartate 382–serine 575 is beta-Casp. The interval glycine 576–lysine 634 is metallo-beta-lactamase C-terminus. Position 601 (histidine 601) interacts with Zn(2+).

This sequence belongs to the metallo-beta-lactamase superfamily. RNA-metabolizing metallo-beta-lactamase-like family. FttA subfamily. As to quaternary structure, homodimer. Interacts with RNA polymerase (RNAP), interacts with the Spt4-Spt5 complex. It depends on Zn(2+) as a cofactor.

With respect to regulation, optimal NaCl concentration is 100 mM for nuclease activity on RNA. In terms of biological role, terminates transcription on the whole genome. Termination is linked to FttA-mediated RNA cleavage and does not require NTP hydrolysis. Cleaves endonucleolytically at the RNA exit channel of RNA polymerase (RNAP); the 5'-3' exonuclease activity of this protein degrades the nascent RNA released from RNAP. An endoribonuclease with no apparent exonuclease activity, has low activity on single-stranded DNA (endodeoxyribonuclease, endoDNase). This is Transcription termination factor FttA from Methanocaldococcus jannaschii (strain ATCC 43067 / DSM 2661 / JAL-1 / JCM 10045 / NBRC 100440) (Methanococcus jannaschii).